The primary structure comprises 131 residues: Ribonuclease VapC30 (131 aa).

The PINc domain occupies 1-129 (MVIDTSALVA…FQHTDIATVA (129 aa)). 2 residues coordinate Mg(2+): Asp4 and Asp99.

The protein belongs to the PINc/VapC protein family. The cofactor is Mg(2+).

Its function is as follows. Toxic component of a type II toxin-antitoxin (TA) system. An RNase. Its toxic effect is neutralized by coexpression with cognate antitoxin VapB30. In Mycobacterium tuberculosis (strain CDC 1551 / Oshkosh), this protein is Ribonuclease VapC30.